We begin with the raw amino-acid sequence, 61 residues long: MDPNCSCATDGSCSCAGSCKCKQCKCTSCKKSCCSCCPVGCAKCSQGCICKEASDKCSCCA.

An N-acetylmethionine modification is found at M1. Residues 1–29 (MDPNCSCATDGSCSCAGSCKCKQCKCTSC) are beta. Positions 5, 7, 13, 15, 19, 21, 24, 26, 29, 33, 34, 36, 37, 41, 44, 48, 50, and 57 each coordinate a divalent metal cation. An alpha region spans residues 30–61 (KKSCCSCCPVGCAKCSQGCICKEASDKCSCCA). S58 is subject to Phosphoserine. A divalent metal cation is bound by residues C59 and C60.

It belongs to the metallothionein superfamily. Type 1 family.

Its function is as follows. Metallothioneins have a high content of cysteine residues that bind various heavy metals; these proteins are transcriptionally regulated by both heavy metals and glucocorticoids. The protein is Metallothionein-2 (Mt2) of Rattus norvegicus (Rat).